We begin with the raw amino-acid sequence, 92 residues long: Small ribosomal subunit protein uS19 (92 aa).

This sequence belongs to the universal ribosomal protein uS19 family.

Functionally, protein S19 forms a complex with S13 that binds strongly to the 16S ribosomal RNA. This is Small ribosomal subunit protein uS19 from Leptospira biflexa serovar Patoc (strain Patoc 1 / Ames).